We begin with the raw amino-acid sequence, 388 residues long: Na(+)/H(+) antiporter NhaA (388 aa).

Residues Met1–Asp11 lie on the Cytoplasmic side of the membrane. The chain crosses the membrane as a helical span at residues Ala12–Ser31. Residues Gly32 to Asn58 are Periplasmic-facing. The helical transmembrane segment at Met59 to Lys80 threads the bilayer. The Cytoplasmic portion of the chain corresponds to Arg81 to Phe96. A helical membrane pass occupies residues Pro97 to Asn116. Residues Tyr117 to Thr122 are Periplasmic-facing. A helical membrane pass occupies residues Arg123 to Ala130. Residues Ala131–Ile154 are Cytoplasmic-facing. Residues Phe155–Thr176 traverse the membrane as a helical segment. Residues Asn177–Ser180 lie on the Periplasmic side of the membrane. The chain crosses the membrane as a helical span at residues Met181–Cys200. Topologically, residues Gly201–Arg204 are cytoplasmic. A helical transmembrane segment spans residues Thr205 to Ser222. Gly223 is a topological domain (periplasmic). A helical membrane pass occupies residues Val224–Phe236. Residues Ile237 to His253 are Cytoplasmic-facing. A helical membrane pass occupies residues Val254–Ala272. Residues Gly273–Ser286 are Periplasmic-facing. Residues Ile287 to Leu310 form a helical membrane-spanning segment. The Cytoplasmic segment spans residues Ala311–Phe339. The chain crosses the membrane as a helical span at residues Thr340–Phe350. Residues Gly351–Leu357 are Periplasmic-facing. Residues Ile358–Leu380 traverse the membrane as a helical segment. The Cytoplasmic segment spans residues Arg381 to Val388.

The protein belongs to the NhaA Na(+)/H(+) (TC 2.A.33) antiporter family.

Its subcellular location is the cell inner membrane. It catalyses the reaction Na(+)(in) + 2 H(+)(out) = Na(+)(out) + 2 H(+)(in). Functionally, na(+)/H(+) antiporter that extrudes sodium in exchange for external protons. In Escherichia coli O6:K15:H31 (strain 536 / UPEC), this protein is Na(+)/H(+) antiporter NhaA.